Reading from the N-terminus, the 402-residue chain is Tyrosine--tRNA ligase (402 aa).

The 'HIGH' region signature appears at 48–57 (PTGSDIHLGH). The short motif at 235-239 (KMSKS) is the 'KMSKS' region element. Residue Lys-238 participates in ATP binding. An S4 RNA-binding domain is found at 338-402 (AKAFYLVSAV…GKKKFVRLVL (65 aa)).

The protein belongs to the class-I aminoacyl-tRNA synthetase family. TyrS type 2 subfamily. In terms of assembly, homodimer.

Its subcellular location is the cytoplasm. It carries out the reaction tRNA(Tyr) + L-tyrosine + ATP = L-tyrosyl-tRNA(Tyr) + AMP + diphosphate + H(+). In terms of biological role, catalyzes the attachment of tyrosine to tRNA(Tyr) in a two-step reaction: tyrosine is first activated by ATP to form Tyr-AMP and then transferred to the acceptor end of tRNA(Tyr). The chain is Tyrosine--tRNA ligase from Synechococcus elongatus (strain ATCC 33912 / PCC 7942 / FACHB-805) (Anacystis nidulans R2).